A 352-amino-acid chain; its full sequence is MSVSNSASPSSLSYRDAGVDIEAGDALVDRIKPFAKRTMRPEVLGGIGGFGALFELSKKFKEPVLVSGTDGVGTKLKLAFQLNKHDTVGQDLVAMSVNDILVQGAEPLFFLDYFACGKLDVDTAADVVKGIAHGCELAGCALIGGETAEMPSMYPEGEYDLAGFAVGAVEKADIIDGSKIVPGDVVLGLASSGAHSNGYSLVRKIIEVAKPDLDADFHGRTFRDVVMEPTRIYVKPLLALMQAMPGVVKGMAHITGGGITENVPRILRDELTARIDAASWTLPPLFQWLQQAGNVDTQEMYRVFNCGIGMAVVVAADVADAVAAQLTAAGETVYRIGRIDSRKDGEAQTIVA.

It belongs to the AIR synthase family.

The protein localises to the cytoplasm. The catalysed reaction is 2-formamido-N(1)-(5-O-phospho-beta-D-ribosyl)acetamidine + ATP = 5-amino-1-(5-phospho-beta-D-ribosyl)imidazole + ADP + phosphate + H(+). It functions in the pathway purine metabolism; IMP biosynthesis via de novo pathway; 5-amino-1-(5-phospho-D-ribosyl)imidazole from N(2)-formyl-N(1)-(5-phospho-D-ribosyl)glycinamide: step 2/2. The chain is Phosphoribosylformylglycinamidine cyclo-ligase from Azoarcus sp. (strain BH72).